We begin with the raw amino-acid sequence, 199 residues long: N-(5'-phosphoribosyl)anthranilate isomerase (199 aa).

Belongs to the TrpF family.

It catalyses the reaction N-(5-phospho-beta-D-ribosyl)anthranilate = 1-(2-carboxyphenylamino)-1-deoxy-D-ribulose 5-phosphate. Its pathway is amino-acid biosynthesis; L-tryptophan biosynthesis; L-tryptophan from chorismate: step 3/5. This is N-(5'-phosphoribosyl)anthranilate isomerase from Lacticaseibacillus paracasei (strain ATCC 334 / BCRC 17002 / CCUG 31169 / CIP 107868 / KCTC 3260 / NRRL B-441) (Lactobacillus paracasei).